The sequence spans 387 residues: Arginine biosynthesis bifunctional protein ArgJ 2 (387 aa).

Substrate contacts are provided by Thr147, Lys169, Thr180, Glu259, Asn382, and Thr387. Thr180 acts as the Nucleophile in catalysis.

The protein belongs to the ArgJ family. As to quaternary structure, heterotetramer of two alpha and two beta chains.

Its subcellular location is the cytoplasm. It catalyses the reaction N(2)-acetyl-L-ornithine + L-glutamate = N-acetyl-L-glutamate + L-ornithine. It carries out the reaction L-glutamate + acetyl-CoA = N-acetyl-L-glutamate + CoA + H(+). Its pathway is amino-acid biosynthesis; L-arginine biosynthesis; L-ornithine and N-acetyl-L-glutamate from L-glutamate and N(2)-acetyl-L-ornithine (cyclic): step 1/1. It participates in amino-acid biosynthesis; L-arginine biosynthesis; N(2)-acetyl-L-ornithine from L-glutamate: step 1/4. In terms of biological role, catalyzes two activities which are involved in the cyclic version of arginine biosynthesis: the synthesis of N-acetylglutamate from glutamate and acetyl-CoA as the acetyl donor, and of ornithine by transacetylation between N(2)-acetylornithine and glutamate. The polypeptide is Arginine biosynthesis bifunctional protein ArgJ 2 (Nostoc sp. (strain PCC 7120 / SAG 25.82 / UTEX 2576)).